Here is a 622-residue protein sequence, read N- to C-terminus: Elongation factor 4 (622 aa).

The tr-type G domain maps to 17–198 (ELLRNFCIIA…QIVRQIPAPV (182 aa)). Residues 29-34 (DHGKST) and 145-148 (NKID) contribute to the GTP site.

The protein belongs to the TRAFAC class translation factor GTPase superfamily. Classic translation factor GTPase family. LepA subfamily.

It is found in the cell membrane. It catalyses the reaction GTP + H2O = GDP + phosphate + H(+). Functionally, required for accurate and efficient protein synthesis under certain stress conditions. May act as a fidelity factor of the translation reaction, by catalyzing a one-codon backward translocation of tRNAs on improperly translocated ribosomes. Back-translocation proceeds from a post-translocation (POST) complex to a pre-translocation (PRE) complex, thus giving elongation factor G a second chance to translocate the tRNAs correctly. Binds to ribosomes in a GTP-dependent manner. This chain is Elongation factor 4, found in Kineococcus radiotolerans (strain ATCC BAA-149 / DSM 14245 / SRS30216).